The sequence spans 282 residues: U1 small nuclear ribonucleoprotein A (282 aa).

RRM domains lie at N10–T89 and H208–K282.

The protein belongs to the RRM U1 A/B'' family. U1 snRNP is composed of the 7 core Sm proteins snrpb, snrpd1, snrpd2, snrpd3, snrpe, snrpf and snrpg that assemble in a heptameric protein ring on the Sm site of the small nuclear RNA to form the core snRNP, and at least three U1 snRNP-specific proteins snrnp70/U1-70K, snrpa/U1-A and snrpc/U1-C.

The protein localises to the nucleus. Functionally, component of the spliceosomal U1 snRNP, which is essential for recognition of the pre-mRNA 5' splice-site and the subsequent assembly of the spliceosome. U1 snRNP is the first snRNP to interact with pre-mRNA. This interaction is required for the subsequent binding of U2 snRNP and the U4/U6/U5 tri-snRNP. Snrpa binds stem loop II of U1 snRNA. This chain is U1 small nuclear ribonucleoprotein A (snrpa), found in Xenopus laevis (African clawed frog).